The following is a 627-amino-acid chain: Ras and EF-hand domain-containing protein homolog (627 aa).

The stretch at 55-245 forms a coiled coil; sequence YERVIRNFLR…RKLHDSNDGL (191 aa). Ser-266 and Ser-272 each carry phosphoserine. GTP contacts are provided by residues 438–443, 541–544, and 578–579; these read AVGKSS, NKAD, and AK.

Belongs to the small GTPase superfamily. Rab family. In terms of assembly, homodimer. Interacts with the dynein-dynactin complex.

It localises to the cytoplasm. Its subcellular location is the perinuclear region. Its function is as follows. Binds predominantly GDP, and also GTP. Acts as a dynein adapter protein that activates dynein-mediated transport and dynein-dynactin motility on microtubules. This Mus musculus (Mouse) protein is Ras and EF-hand domain-containing protein homolog (Rasef).